We begin with the raw amino-acid sequence, 854 residues long: Arsenate respiratory reductase molybdopterin-containing subunit ArrA (854 aa).

Positions 1 to 41 (MKKENQVNLGRRQLLKSTAAGTVLTGIGGTLSFTPIVEGIA) form a signal peptide, tat-type signal. The 4Fe-4S Mo/W bis-MGD-type domain occupies 54–110 (GEWLATTCQGCTSWCAKQIYVMDGRALKVRGNPNSGVHGMSSCPRQHLSLQQVYDPD). Residues C61, C64, C68, and C96 each contribute to the [4Fe-4S] cluster site. R165 lines the arsenite pocket. Y166 is an arsenate binding site. H189 contacts arsenite. S190 contacts arsenate. Position 193 (C193) interacts with Mo-bis(molybdopterin guanine dinucleotide). K198 contacts arsenate. Y210 contacts arsenite.

This sequence belongs to the prokaryotic molybdopterin-containing oxidoreductase family. As to quaternary structure, heterodimer composed of one large subunit (ArrA) and one small subunit (ArrB). The cofactor is [4Fe-4S] cluster. Requires Mo-bis(molybdopterin guanine dinucleotide) as cofactor. Predicted to be exported by the Tat system. The position of the signal peptide cleavage has not been experimentally proven.

The protein resides in the periplasm. It catalyses the reaction arsenite + A + H2O = arsenate + AH2 + H(+). Its activity is regulated as follows. Phosphate is a competitive inhibitor. Its function is as follows. Component of the arsenate respiratory reductase (Arr) complex, which catalyzes the reduction of arsenate (As(V)) to arsenite (As(III)). ArrA is the arsenate-binding subunit. The periplasmic localization of this complex may allow the cell to couple arsenate reduction to energy production before arsenate can be transported to the cell cytoplasm and enter the ars detoxification pathway, an energy-requiring process. This Shewanella sp. (strain ANA-3) protein is Arsenate respiratory reductase molybdopterin-containing subunit ArrA.